The sequence spans 453 residues: uncharacterized protein (453 aa).

An N-terminal signal peptide occupies residues Met1–Gly23. Residues Glu24–Thr137 are Lumenal-facing. A helical transmembrane segment spans residues Asn138–Pro158. The Cytoplasmic segment spans residues Lys159–Met165. The chain crosses the membrane as a helical span at residues Leu166–Leu186. Residues Pro187–Gly194 lie on the Lumenal side of the membrane. The helical transmembrane segment at Gly195–Met215 threads the bilayer. Residues Asp216–Val358 are Cytoplasmic-facing. The span at Ser229–Glu238 shows a compositional bias: basic and acidic residues. The segment at Ser229–Asp278 is disordered. Positions Thr240–Asp254 are enriched in polar residues. Over residues Lys256 to Asp278 the composition is skewed to basic and acidic residues. The helical transmembrane segment at Leu359–Ile379 threads the bilayer. Over Tyr380–Lys399 the chain is Lumenal. Residues Leu400–Leu420 form a helical membrane-spanning segment. Over Leu421–Asn432 the chain is Cytoplasmic. The helical transmembrane segment at Met433–Val453 threads the bilayer.

Belongs to the ZIP transporter (TC 2.A.5) family. KE4/Catsup subfamily.

Its subcellular location is the endoplasmic reticulum membrane. This is an uncharacterized protein from Schizosaccharomyces pombe (strain 972 / ATCC 24843) (Fission yeast).